Consider the following 1562-residue polypeptide: Phospholipid-transporting ATPase dnf1 (1562 aa).

4 disordered regions span residues M1–G38, L55–R94, T115–H134, and P146–P166. Topologically, residues M1–W275 are extracellular. Over residues G12–T21 the composition is skewed to polar residues. Over residues D60–I69 the composition is skewed to acidic residues. Residues G71–D86 are compositionally biased toward basic and acidic residues. A helical membrane pass occupies residues S276–L296. Over R297–R574 the chain is Cytoplasmic. The segment at S347 to T406 is disordered. Residues S358–E369 are compositionally biased toward basic and acidic residues. Pro residues predominate over residues P372–P381. The chain crosses the membrane as a helical span at residues I575–F595. The Extracellular portion of the chain corresponds to V596–S614. Residues F615 to Y635 traverse the membrane as a helical segment. The Cytoplasmic portion of the chain corresponds to V636 to Q1309. The active-site 4-aspartylphosphate intermediate is D684. ATP contacts are provided by D684, K685, T686, E794, F843, S845, K848, and K866. D684 is a Mg(2+) binding site. Residue T686 coordinates Mg(2+). Residue S954 is modified to Phosphoserine. ATP contacts are provided by residues R1022, T1023, T1102, G1103, D1104, V1181–T1188, R1216, and K1222. A Mg(2+)-binding site is contributed by D1243. Residues N1246 and D1247 each coordinate ATP. Residues F1310–Y1330 form a helical membrane-spanning segment. At E1331 to S1332 the chain is on the extracellular side. Residues W1333–F1353 traverse the membrane as a helical segment. Residues E1354–R1381 are Cytoplasmic-facing. A helical transmembrane segment spans residues V1382–Y1402. The Extracellular segment spans residues S1403–N1414. A helical transmembrane segment spans residues I1415–V1435. Residues F1436–N1443 are Cytoplasmic-facing. Residues I1444–I1464 form a helical membrane-spanning segment. Over S1465–W1490 the chain is Extracellular. Residues W1491–L1511 form a helical membrane-spanning segment. The Cytoplasmic portion of the chain corresponds to R1512–D1562.

Belongs to the cation transport ATPase (P-type) (TC 3.A.3) family. Type IV subfamily. The cofactor is Mg(2+).

It localises to the golgi apparatus. The protein localises to the trans-Golgi network membrane. Its subcellular location is the endosome membrane. The catalysed reaction is ATP + H2O + phospholipidSide 1 = ADP + phosphate + phospholipidSide 2.. It carries out the reaction a 1,2-diacyl-sn-glycero-3-phosphocholine(out) + ATP + H2O = a 1,2-diacyl-sn-glycero-3-phosphocholine(in) + ADP + phosphate + H(+). The enzyme catalyses a 1,2-diacyl-sn-glycero-3-phosphoethanolamine(out) + ATP + H2O = a 1,2-diacyl-sn-glycero-3-phosphoethanolamine(in) + ADP + phosphate + H(+). In terms of biological role, catalytic component of a P4-ATPase flippase complex which catalyzes the hydrolysis of ATP coupled to the transport of phosphatidylcholine and small amounts of phosphatidylethanolamine from the lumen to the cytosolic leaflet of the trans-Golgi network and ensures the maintenance of asymmetric distribution of phospholipids. May be involved in transport from early endosomes to the trans-Golgi network (TGN). In Schizosaccharomyces pombe (strain 972 / ATCC 24843) (Fission yeast), this protein is Phospholipid-transporting ATPase dnf1.